A 180-amino-acid polypeptide reads, in one-letter code: Molybdopterin synthase catalytic subunit (180 aa).

The segment covering 1-10 (MSSTTPTTEP) has biased composition (polar residues). Residues 1–31 (MSSTTPTTEPDQLPPHLDPQTYPRTTTNPTL) form a disordered region. Positions 21 to 31 (TYPRTTTNPTL) are enriched in low complexity. Residues 131–132 (HR), lysine 147, and 154–156 (KKE) each bind substrate.

The protein belongs to the MoaE family. MOCS2B subfamily. As to quaternary structure, heterotetramer; composed of 2 small (MOCS2A) and 2 large (MOCS2B) subunits.

Its subcellular location is the cytoplasm. It carries out the reaction 2 [molybdopterin-synthase sulfur-carrier protein]-C-terminal-Gly-aminoethanethioate + cyclic pyranopterin phosphate + H2O = molybdopterin + 2 [molybdopterin-synthase sulfur-carrier protein]-C-terminal Gly-Gly + 2 H(+). It functions in the pathway cofactor biosynthesis; molybdopterin biosynthesis. Its function is as follows. Catalytic subunit of the molybdopterin synthase complex, a complex that catalyzes the conversion of precursor Z into molybdopterin. Acts by mediating the incorporation of 2 sulfur atoms from thiocarboxylated MOCS2A into precursor Z to generate a dithiolene group. The chain is Molybdopterin synthase catalytic subunit from Aspergillus niger (strain ATCC MYA-4892 / CBS 513.88 / FGSC A1513).